The primary structure comprises 1384 residues: DNA-directed RNA polymerase subunit beta (1384 aa).

Belongs to the RNA polymerase beta chain family. The RNAP catalytic core consists of 2 alpha, 1 beta, 1 beta' and 1 omega subunit. When a sigma factor is associated with the core the holoenzyme is formed, which can initiate transcription.

The catalysed reaction is RNA(n) + a ribonucleoside 5'-triphosphate = RNA(n+1) + diphosphate. Functionally, DNA-dependent RNA polymerase catalyzes the transcription of DNA into RNA using the four ribonucleoside triphosphates as substrates. The polypeptide is DNA-directed RNA polymerase subunit beta (Xylella fastidiosa (strain M12)).